Consider the following 241-residue polypeptide: Ribonuclease HII (241 aa).

Residues 27-227 enclose the RNase H type-2 domain; it reads GPVAGVDEAG…REARSLRLED (201 aa). Aspartate 33, glutamate 34, and aspartate 128 together coordinate a divalent metal cation.

Belongs to the RNase HII family. Mn(2+) serves as cofactor. The cofactor is Mg(2+).

The protein resides in the cytoplasm. The enzyme catalyses Endonucleolytic cleavage to 5'-phosphomonoester.. Its function is as follows. Endonuclease that specifically degrades the RNA of RNA-DNA hybrids. The polypeptide is Ribonuclease HII (Frankia alni (strain DSM 45986 / CECT 9034 / ACN14a)).